Here is a 55-residue protein sequence, read N- to C-terminus: UPF0434 protein BARBAKC583_1098 (55 aa).

The protein belongs to the UPF0434 family.

The protein is UPF0434 protein BARBAKC583_1098 of Bartonella bacilliformis (strain ATCC 35685 / KC583 / Herrer 020/F12,63).